The chain runs to 211 residues: ATP phosphoribosyltransferase (211 aa).

The protein belongs to the ATP phosphoribosyltransferase family. Short subfamily. As to quaternary structure, heteromultimer composed of HisG and HisZ subunits.

The protein resides in the cytoplasm. It carries out the reaction 1-(5-phospho-beta-D-ribosyl)-ATP + diphosphate = 5-phospho-alpha-D-ribose 1-diphosphate + ATP. The protein operates within amino-acid biosynthesis; L-histidine biosynthesis; L-histidine from 5-phospho-alpha-D-ribose 1-diphosphate: step 1/9. Its function is as follows. Catalyzes the condensation of ATP and 5-phosphoribose 1-diphosphate to form N'-(5'-phosphoribosyl)-ATP (PR-ATP). Has a crucial role in the pathway because the rate of histidine biosynthesis seems to be controlled primarily by regulation of HisG enzymatic activity. The polypeptide is ATP phosphoribosyltransferase (Clostridium botulinum (strain 657 / Type Ba4)).